We begin with the raw amino-acid sequence, 182 residues long: UPF0301 protein CHU_1773 (182 aa).

The protein belongs to the UPF0301 (AlgH) family.

The chain is UPF0301 protein CHU_1773 from Cytophaga hutchinsonii (strain ATCC 33406 / DSM 1761 / CIP 103989 / NBRC 15051 / NCIMB 9469 / D465).